A 97-amino-acid chain; its full sequence is uncharacterized protein (97 aa).

This is an uncharacterized protein from Mycoplasma capricolum subsp. capricolum (strain California kid / ATCC 27343 / NCTC 10154).